Reading from the N-terminus, the 216-residue chain is DNA replication complex GINS protein psf1 (216 aa).

Residues 110 to 133 form a disordered region; the sequence is QTTGGPKGVTEGNEGGGTTSSLSP. Residues 111–127 are compositionally biased toward gly residues; that stretch reads TTGGPKGVTEGNEGGGT.

This sequence belongs to the GINS1/PSF1 family. In terms of assembly, component of the GINS complex which is a heterotetramer of div-26/sld5, drc-1/psf1, drc-2/psf2 and drc-3/psf3.

It is found in the nucleus. Functionally, the GINS complex plays an essential role in the initiation of DNA replication. In Neurospora crassa (strain ATCC 24698 / 74-OR23-1A / CBS 708.71 / DSM 1257 / FGSC 987), this protein is DNA replication complex GINS protein psf1 (drc-1).